The primary structure comprises 660 residues: Cysteine--tRNA ligase, cytoplasmic (660 aa).

The segment covering M1–E10 has biased composition (polar residues). The disordered stretch occupies residues M1 to K20. C65 is a Zn(2+) binding site. Residues P67–H77 carry the 'HIGH' region motif. The Zn(2+) site is built by C256, H281, and E285. Positions K314–S318 match the 'KMSKS' region motif. K317 lines the ATP pocket. Disordered stretches follow at residues I563 to K584 and Q627 to Q660. Positions Q627–N639 are enriched in basic and acidic residues. Low complexity predominate over residues S643–Q660.

Belongs to the class-I aminoacyl-tRNA synthetase family. Requires Zn(2+) as cofactor.

It is found in the cytoplasm. The enzyme catalyses tRNA(Cys) + L-cysteine + ATP = L-cysteinyl-tRNA(Cys) + AMP + diphosphate. This Dictyostelium discoideum (Social amoeba) protein is Cysteine--tRNA ligase, cytoplasmic (cysS).